The chain runs to 260 residues: Ras-related protein Rab-32B (260 aa).

The tract at residues 11 to 50 is disordered; the sequence is FDTDPDVSTDSNYNNNNNSNNNNSIISNSNNNNNNNNNNV. The span at 21–49 shows a compositional bias: low complexity; it reads SNYNNNNNSNNNNSIISNSNNNNNNNNNN. GTP is bound at residue 66 to 73; the sequence is GDYAVGKS. Positions 88–96 match the Effector region motif; the sequence is YKLTIGVDF. GTP-binding positions include 115–119 and 177–180; these read DIAGH and NKSD. Residues 231–260 are disordered; it reads TNHPPKPEEDTLELTKTNGEKSDDSKSCCK. The span at 248 to 260 shows a compositional bias: basic and acidic residues; sequence NGEKSDDSKSCCK. 2 S-geranylgeranyl cysteine lipidation sites follow: Cys-258 and Cys-259.

Belongs to the small GTPase superfamily. Rab family.

This is Ras-related protein Rab-32B (rab32B) from Dictyostelium discoideum (Social amoeba).